A 298-amino-acid polypeptide reads, in one-letter code: 3'-5' exonuclease crn-4 (298 aa).

One can recognise an Exonuclease domain in the interval 12–192; the sequence is LILDFETTSD…DDCLNIATIL (181 aa). D15, E17, and D184 together coordinate Mg(2+). Zn(2+) is bound by residues C210, C260, C263, and C270.

As to quaternary structure, homodimer (via C-terminus). Interacts with crn-5; interaction promotes the DNase activity of crn-4. Interacts with cps-6, crn-1 and cyn-13. Mg(2+) serves as cofactor.

Its activity is regulated as follows. Exonuclease activity is inhibited in vitro by pontacyl violet 6R (PV6R), p-chloromercuriphenyl sulfonate (PCMPS), 5,5'-dithiobis(2-nitrobenzoic acid) (DTNB), aurintricarboxylic acid (ATA), 2-morpholin-4-ylethanesulfonate (MES), 4-[(4,6-dichloro-1,3,5-triazin-2-yl)amino]-2-(3-hydroxy-6-oxoxanthen-9-yl)benzoic acid (DR396) and fmoc-d-Cha-OH (FDCO). Interaction with ssRNA is reduced in vitro by PV6R. Possesses 3'-&gt;5' exoribonuclease activity in digestion of DNA and RNA. Cleaves nucleic acid substrates with efficiencies in the following order: single-stranded RNA (ssRNA) &gt; double-stranded DNA (dsDNA) &gt; single-stranded DNA (ssDNA). Involved in apoptotic DNA degradation. In Caenorhabditis elegans, this protein is 3'-5' exonuclease crn-4 (crn-4).